Consider the following 453-residue polypeptide: Bifunctional protein GlmU (453 aa).

A pyrophosphorylase region spans residues 1–225 (MNIVILAAGT…EWETLGVNSK (225 aa)). Residues 6–9 (LAAG), lysine 20, glutamine 71, 76–77 (GT), 98–100 (YGD), glycine 135, glutamate 150, asparagine 165, and asparagine 223 each bind UDP-N-acetyl-alpha-D-glucosamine. Aspartate 100 provides a ligand contact to Mg(2+). Position 223 (asparagine 223) interacts with Mg(2+). The segment at 226-246 (AQLAELERIHQRKLAEALLAD) is linker. Residues 247–453 (GVTLADPARI…GYVRPVKKKS (207 aa)) form an N-acetyltransferase region. Positions 329 and 347 each coordinate UDP-N-acetyl-alpha-D-glucosamine. Histidine 359 (proton acceptor) is an active-site residue. UDP-N-acetyl-alpha-D-glucosamine is bound by residues tyrosine 362 and asparagine 373. Acetyl-CoA is bound by residues alanine 376, 382 to 383 (NY), serine 401, and alanine 419.

The protein in the N-terminal section; belongs to the N-acetylglucosamine-1-phosphate uridyltransferase family. In the C-terminal section; belongs to the transferase hexapeptide repeat family. Homotrimer. It depends on Mg(2+) as a cofactor.

The protein resides in the cytoplasm. It catalyses the reaction alpha-D-glucosamine 1-phosphate + acetyl-CoA = N-acetyl-alpha-D-glucosamine 1-phosphate + CoA + H(+). The catalysed reaction is N-acetyl-alpha-D-glucosamine 1-phosphate + UTP + H(+) = UDP-N-acetyl-alpha-D-glucosamine + diphosphate. It participates in nucleotide-sugar biosynthesis; UDP-N-acetyl-alpha-D-glucosamine biosynthesis; N-acetyl-alpha-D-glucosamine 1-phosphate from alpha-D-glucosamine 6-phosphate (route II): step 2/2. The protein operates within nucleotide-sugar biosynthesis; UDP-N-acetyl-alpha-D-glucosamine biosynthesis; UDP-N-acetyl-alpha-D-glucosamine from N-acetyl-alpha-D-glucosamine 1-phosphate: step 1/1. Its pathway is bacterial outer membrane biogenesis; LPS lipid A biosynthesis. Its function is as follows. Catalyzes the last two sequential reactions in the de novo biosynthetic pathway for UDP-N-acetylglucosamine (UDP-GlcNAc). The C-terminal domain catalyzes the transfer of acetyl group from acetyl coenzyme A to glucosamine-1-phosphate (GlcN-1-P) to produce N-acetylglucosamine-1-phosphate (GlcNAc-1-P), which is converted into UDP-GlcNAc by the transfer of uridine 5-monophosphate (from uridine 5-triphosphate), a reaction catalyzed by the N-terminal domain. The protein is Bifunctional protein GlmU of Burkholderia thailandensis (strain ATCC 700388 / DSM 13276 / CCUG 48851 / CIP 106301 / E264).